Reading from the N-terminus, the 834-residue chain is Protein SEY1 (834 aa).

Positions Met-1–Ser-26 are disordered. Over Met-1–Gln-733 the chain is Cytoplasmic. The GB1/RHD3-type G domain occupies Pro-63–Tyr-296. Gly-73 to Ser-80 lines the GTP pocket. The stretch at Val-659 to Glu-688 forms a coiled coil. Residues Thr-670–Asp-689 form a disordered region. A compositionally biased stretch (acidic residues) spans Glu-676–Asp-689. The helical transmembrane segment at Ile-734 to Leu-754 threads the bilayer. Over Arg-755–Pro-757 the chain is Lumenal. The helical transmembrane segment at Phe-758–Leu-778 threads the bilayer. Over Leu-779–Thr-834 the chain is Cytoplasmic.

Belongs to the TRAFAC class dynamin-like GTPase superfamily. GB1/RHD3 GTPase family. RHD3 subfamily.

Its subcellular location is the endoplasmic reticulum membrane. Its function is as follows. Cooperates with the reticulon proteins and tubule-shaping DP1 family proteins to generate and maintain the structure of the tubular endoplasmic reticulum network. Has GTPase activity, which is required for its function in ER organization. The polypeptide is Protein SEY1 (Clavispora lusitaniae (strain ATCC 42720) (Yeast)).